The sequence spans 133 residues: Putative pre-16S rRNA nuclease (133 aa).

This sequence belongs to the YqgF nuclease family.

Its subcellular location is the cytoplasm. Its function is as follows. Could be a nuclease involved in processing of the 5'-end of pre-16S rRNA. This is Putative pre-16S rRNA nuclease from Dehalococcoides mccartyi (strain ATCC BAA-2266 / KCTC 15142 / 195) (Dehalococcoides ethenogenes (strain 195)).